Reading from the N-terminus, the 127-residue chain is Protein ApaG (127 aa).

The ApaG domain occupies 3 to 127 (KTSIPDFQIT…FYLIAPLALH (125 aa)).

This chain is Protein ApaG, found in Bdellovibrio bacteriovorus (strain ATCC 15356 / DSM 50701 / NCIMB 9529 / HD100).